The chain runs to 139 residues: Natriuretic peptide Mf-NP (139 aa).

Residues 1–25 form the signal peptide; sequence MVGLSRLTGGGLLLVLALLPLALDG. Residues 26–75 constitute a propeptide that is removed on maturation; that stretch reads KPLEEAPTAPSRIIPFSRPVRKESQAVLDPMVHPERPAGSGDDGDLSRLE. A disulfide bridge connects residues Cys86 and Cys102. Positions 117–139 are excised as a propeptide; sequence IIPFSRPVRKESRAALDRMQHPG.

This sequence belongs to the natriuretic peptide family. As to expression, expressed by the venom gland.

It localises to the secreted. Its function is as follows. Natriuretic peptide that dose-dependently induces the rapid relaxation of rat aortic strips phenylephrine-precontracted. Acts by stimulating cGMP production in a dose-dependent manner (by probably activating NPR1 and/or NPR2). May also show potent hypotensive effects. The sequence is that of Natriuretic peptide Mf-NP from Micrurus fulvius (Eastern coral snake).